A 103-amino-acid chain; its full sequence is Large ribosomal subunit protein bL28 (103 aa).

This sequence belongs to the bacterial ribosomal protein bL28 family.

The polypeptide is Large ribosomal subunit protein bL28 (Anaplasma phagocytophilum (strain HZ)).